The chain runs to 570 residues: Proline--tRNA ligase (570 aa).

Belongs to the class-II aminoacyl-tRNA synthetase family. ProS type 1 subfamily. As to quaternary structure, homodimer.

Its subcellular location is the cytoplasm. The enzyme catalyses tRNA(Pro) + L-proline + ATP = L-prolyl-tRNA(Pro) + AMP + diphosphate. In terms of biological role, catalyzes the attachment of proline to tRNA(Pro) in a two-step reaction: proline is first activated by ATP to form Pro-AMP and then transferred to the acceptor end of tRNA(Pro). As ProRS can inadvertently accommodate and process non-cognate amino acids such as alanine and cysteine, to avoid such errors it has two additional distinct editing activities against alanine. One activity is designated as 'pretransfer' editing and involves the tRNA(Pro)-independent hydrolysis of activated Ala-AMP. The other activity is designated 'posttransfer' editing and involves deacylation of mischarged Ala-tRNA(Pro). The misacylated Cys-tRNA(Pro) is not edited by ProRS. This chain is Proline--tRNA ligase, found in Shewanella sp. (strain MR-4).